The chain runs to 423 residues: D-tagatose-1,6-bisphosphate aldolase subunit GatZ (423 aa).

Belongs to the GatZ/KbaZ family. GatZ subfamily. As to quaternary structure, forms a complex with GatY.

It functions in the pathway carbohydrate metabolism; D-tagatose 6-phosphate degradation; D-glyceraldehyde 3-phosphate and glycerone phosphate from D-tagatose 6-phosphate: step 2/2. Its function is as follows. Component of the tagatose-1,6-bisphosphate aldolase GatYZ that is required for full activity and stability of the Y subunit. Could have a chaperone-like function for the proper and stable folding of GatY. When expressed alone, GatZ does not show any aldolase activity. Is involved in the catabolism of galactitol. The chain is D-tagatose-1,6-bisphosphate aldolase subunit GatZ from Salmonella enteritidis PT4 (strain P125109).